We begin with the raw amino-acid sequence, 162 residues long: Transcription elongation factor GreA (162 aa).

A coiled-coil region spans residues 9 to 38 (QGYKALEEELARLKSERPEIIQAIKEAREE).

This sequence belongs to the GreA/GreB family.

In terms of biological role, necessary for efficient RNA polymerase transcription elongation past template-encoded arresting sites. The arresting sites in DNA have the property of trapping a certain fraction of elongating RNA polymerases that pass through, resulting in locked ternary complexes. Cleavage of the nascent transcript by cleavage factors such as GreA or GreB allows the resumption of elongation from the new 3'terminus. GreA releases sequences of 2 to 3 nucleotides. In Desulfovibrio desulfuricans (strain ATCC 27774 / DSM 6949 / MB), this protein is Transcription elongation factor GreA.